Consider the following 644-residue polypeptide: Chaperone protein DnaK (644 aa).

Position 199 is a phosphothreonine; by autocatalysis (threonine 199). A disordered region spans residues 605 to 644 (KKSSEGQAAQGQTQSQESTKPAEEGVVDAEFEEVKEEDKK). Over residues 609-623 (EGQAAQGQTQSQEST) the composition is skewed to polar residues. Residues 629-644 (GVVDAEFEEVKEEDKK) are compositionally biased toward acidic residues.

It belongs to the heat shock protein 70 family.

Acts as a chaperone. The sequence is that of Chaperone protein DnaK from Legionella pneumophila subsp. pneumophila (strain Philadelphia 1 / ATCC 33152 / DSM 7513).